Consider the following 173-residue polypeptide: Putative metal-dependent hydrolase BcerKBAB4_2443 (173 aa).

3 residues coordinate Zn(2+): histidine 65, histidine 156, and histidine 160.

Belongs to the metal hydrolase YfiT family. Homodimer. It depends on Zn(2+) as a cofactor.

It localises to the cytoplasm. Its function is as follows. Possible metal-dependent hydrolase. This is Putative metal-dependent hydrolase BcerKBAB4_2443 from Bacillus mycoides (strain KBAB4) (Bacillus weihenstephanensis).